Here is a 501-residue protein sequence, read N- to C-terminus: Sucrose transport protein SUT2 (501 aa).

Topologically, residues 1–31 (MPRRPSGGGGGAGPAAAAVRKVPLRKLLRAA) are cytoplasmic. Residues 32–52 (SVACGVQFGWALQLSLLTPYV) traverse the membrane as a helical segment. Residues 53–55 (QEL) lie on the Extracellular side of the membrane. Residues 56 to 76 (GIPHAFASLVWLCGPLSGLLV) traverse the membrane as a helical segment. The Cytoplasmic segment spans residues 77 to 98 (QPLVGHLSDRIAPAASPLGRRR). A helical transmembrane segment spans residues 99–119 (PFIAAGAASIAAAVLTVGFSA). Over 120–135 (DLGRIFGDSITPGSTR) the chain is Extracellular. Residues 136–156 (LGAIIVYLVGFWLLDVGNNAT) form a helical membrane-spanning segment. The Cytoplasmic portion of the chain corresponds to 157–176 (QGPCRAFLADLTENDPRRTR). Residues 177-197 (IANAYFSLFMALGNILGYATG) form a helical membrane-spanning segment. Residues 198-222 (AYSGWYKIFPFTVTPSCSISCANLK) are Extracellular-facing. The chain crosses the membrane as a helical span at residues 223 to 243 (SAFLLDIIILVVTTCITVASV). Topologically, residues 244–278 (QEPQSLGSDEADHPSTEQEAFLWELFGSFRYFTLP) are cytoplasmic. Residues 279-299 (VWMVLIVTALTWIGWFPFILF) traverse the membrane as a helical segment. Over 300–327 (DTDWMGREIYRGSPDDPSITQSYHDGVR) the chain is Extracellular. A helical membrane pass occupies residues 328 to 348 (MGSFGLMLNSVLLGFTSIVLE). Over 349–356 (KLCRKWGA) the chain is Cytoplasmic. The helical transmembrane segment at 357-377 (GLVWGVSNILMALCFVAMLVI) threads the bilayer. Residues 378-394 (TYVAKNMDYPPSGVPPT) lie on the Extracellular side of the membrane. The chain crosses the membrane as a helical span at residues 395 to 415 (GIVIASLVVFTILGAPLAITY). Residues 416-433 (SIPYAMAASRVENLGLGQ) lie on the Cytoplasmic side of the membrane. A helical membrane pass occupies residues 434-454 (GLAMGILNLAIVIPQVIVSLG). Residues 455 to 467 (SGPWDQLFGGGNA) lie on the Extracellular side of the membrane. The helical transmembrane segment at 468-488 (PAFAVAAAASFIGGLVAILGL) threads the bilayer. Topologically, residues 489 to 501 (PRARIASRRRGHR) are cytoplasmic.

Belongs to the glycoside-pentoside-hexuronide (GPH) cation symporter transporter (TC 2.A.2.4) family. Homodimer. Expressed in source leaf blades.

It localises to the cell membrane. It functions in the pathway glycan biosynthesis; sucrose metabolism. Responsible for the transport of sucrose into the cell, with the concomitant uptake of protons (symport system). May also transport other glucosides. This Oryza sativa subsp. indica (Rice) protein is Sucrose transport protein SUT2 (SUT2).